The following is a 38-amino-acid chain: Phi-Lf prophage-derived putative minor coat protein (38 aa).

This is Phi-Lf prophage-derived putative minor coat protein (gIX-1) from Xanthomonas campestris pv. campestris (strain ATCC 33913 / DSM 3586 / NCPPB 528 / LMG 568 / P 25).